The chain runs to 1427 residues: MAFRKENKTKSNFSKISIGLASPEEILENSSGEVLKPETINYRTYKPERDGLFCERIFGPIKDYECHCGKYKRIRYKGIVCDRCGVEVTEKKVRRERMGHIQLVVPVAHIWYFRSLPNKIGYLLGLPTKKLDSIIYYERYVVIQPGVKAEDGIAEYDLLSEEEYLDILDTLPKDNQYLEDNDPNKFIAKMGAEAIYDLLARLDLDALSYELRHRAGNDASQQRKNEALKRLQVVESFRASRGRNKPEWMIVRIVPVIPPELRPLVPLDGGRFATSDLNDLYRRVIIRNNRLKRLIEIKAPEVILRNEKRMLQESVDSLFDNSRKSSAVKTDANRPLKSLSDSLKGKQGRFRQNLLGKRVDYSARSVIVVGPELKMGECGIPKLMAAELYKPFIIRKLIERGIVKTVKSAKKIVDRKEAVIWDILEHVMKGHPVLLNRAPTLHRLGIQAFQPKMIEGKAIQLHPLACTAFNADFDGDQMAVHLPLSNEAILEAQMLMLQSHNILNPANGAPITVPAQDMVLGLYYITKLRAGAKGEGLTFYGPEEALIAYNEGKVDIHAPVKVIVKDVDENGNIVDVMRETSVGRVIVNEIVPPEAGYINTIISKKSLRDIISDVIKVCGVAKAADFLDGIKNLGYQMAFKGGLSFNLGDIIIPKEKETLVQKGYDEVEQVVNNYNMGFITNNERYNQVIDIWTHVNSELSNILMKTISSDDQGFNSVYMMLDSGARGSKEQIRQLSGMRGLMAKLQKAGAEGGQIIENPILSNFKEGLSVLEYFISTHGARKGLADTALKTADAGYLTRRLVDVSHDVIITEEDCGTLRGLVCTDLKNNDEVIATLYERILGRVSVHDIIHPTTGELLVAGGEEITEEVAKKIQDSPIESVEIRSVLTCEAKKGVCAKCYGRNLATSRMVQKGEAVGVIAAQSIGEPGTQLTLRTFHAGGTAANIAANASIVAKNSARLEFEELRTVDIVDEMGEAAKVVVGRLAEVRFVDVNTGIVLSTHNVPYGSTLYVSDGDLVEKGKLIAKWDPFNAVIITEATGKIEFEGVIENVTYKVESDEATGLREIIIIESKDKTKVPSAHILTEDGDLIRTYNLPVGGHVIIENGQKVKAGEVIVKIPRAVGKAGDITGGLPRVTELFEARNPSNPAVVSEIDGEVTMGKIKRGNREIIVTSKTGEVKKYLVALSKQILVQENDYVRAGTPLSDGATTPADILAIKGPTAVQEYIVNEVQDVYRLQGVKINDKHFEIIVRQMMRKVQIDEPGDTRFLEQQVVDKLEFMEENDRIWGKKVVVDAGDSQNMQPGQIVTARKLRDENSMLKRRDLKPVEVRDAVAATSTQILQGITRAALQTSSFMSAASFQETTKVLNEAAINGKTDKLEGMKENVICGHLIPAGTGQREFEKIIVGSKEEYDRILANKKTVLDYNEVE.

Cys-66, Cys-68, Cys-81, and Cys-84 together coordinate Zn(2+). Positions 472, 474, and 476 each coordinate Mg(2+). Positions 815, 889, 896, and 899 each coordinate Zn(2+).

The protein belongs to the RNA polymerase beta' chain family. The RNAP catalytic core consists of 2 alpha, 1 beta, 1 beta' and 1 omega subunit. When a sigma factor is associated with the core the holoenzyme is formed, which can initiate transcription. It depends on Mg(2+) as a cofactor. The cofactor is Zn(2+).

The catalysed reaction is RNA(n) + a ribonucleoside 5'-triphosphate = RNA(n+1) + diphosphate. DNA-dependent RNA polymerase catalyzes the transcription of DNA into RNA using the four ribonucleoside triphosphates as substrates. The polypeptide is DNA-directed RNA polymerase subunit beta' (Bacteroides thetaiotaomicron (strain ATCC 29148 / DSM 2079 / JCM 5827 / CCUG 10774 / NCTC 10582 / VPI-5482 / E50)).